Reading from the N-terminus, the 123-residue chain is Protein Wnt-7b (123 aa).

S1 is lipidated: O-palmitoleoyl serine; by PORCN. Residues 33–61 (VEVVRASRLRQPTFLKIKQIKSYQKPMET) form a disordered linker region. An intrachain disulfide couples C89 to C104. N-linked (GlcNAc...) asparagine glycosylation is present at N90.

The protein belongs to the Wnt family. Post-translationally, palmitoleoylation is required for efficient binding to frizzled receptors. Depalmitoleoylation leads to Wnt signaling pathway inhibition.

It is found in the secreted. The protein localises to the extracellular space. The protein resides in the extracellular matrix. Ligand for members of the frizzled family of seven transmembrane receptors that functions in the canonical Wnt/beta-catenin signaling pathway. Required for normal fusion of the chorion and the allantois during placenta development. Required for central nervous system (CNS) angiogenesis and blood-brain barrier regulation. The protein is Protein Wnt-7b (WNT7B) of Anser caerulescens (Snow goose).